A 1070-amino-acid polypeptide reads, in one-letter code: DNA-directed RNA polymerase subunit beta (1070 aa).

It belongs to the RNA polymerase beta chain family. In terms of assembly, in plastids the minimal PEP RNA polymerase catalytic core is composed of four subunits: alpha, beta, beta', and beta''. When a (nuclear-encoded) sigma factor is associated with the core the holoenzyme is formed, which can initiate transcription.

The protein localises to the plastid. The enzyme catalyses RNA(n) + a ribonucleoside 5'-triphosphate = RNA(n+1) + diphosphate. In terms of biological role, DNA-dependent RNA polymerase catalyzes the transcription of DNA into RNA using the four ribonucleoside triphosphates as substrates. This chain is DNA-directed RNA polymerase subunit beta (rpoB), found in Cuscuta reflexa (Southern Asian dodder).